A 183-amino-acid chain; its full sequence is MEESQQQSTKFDAPPSPYVPSRVYLAQIYWKKPAIVVLRVLQFVFSLIAFSVMADLLHDVQGSIKSLSYTVAIGVLACAYALAQLSFSLWCVIRGATSSSGVTPLYQYATFICDQMSTYFLISAASATATLIDVSGVCGSNGSGTNLCSRSTASVTFAFLAFLAFSASSVLTGYYLVKCILKA.

At 1–33 (MEESQQQSTKFDAPPSPYVPSRVYLAQIYWKKP) the chain is on the cytoplasmic side. Residues 34 to 54 (AIVVLRVLQFVFSLIAFSVMA) traverse the membrane as a helical segment. Residues 55–72 (DLLHDVQGSIKSLSYTVA) lie on the Extracellular side of the membrane. Residues 73-93 (IGVLACAYALAQLSFSLWCVI) traverse the membrane as a helical segment. Residues 94–118 (RGATSSSGVTPLYQYATFICDQMST) are Cytoplasmic-facing. The helical transmembrane segment at 119-139 (YFLISAASATATLIDVSGVCG) threads the bilayer. Residues 140–156 (SNGSGTNLCSRSTASVT) are Extracellular-facing. Residue Asn-141 is glycosylated (N-linked (GlcNAc...) asparagine). Residues 157-177 (FAFLAFLAFSASSVLTGYYLV) traverse the membrane as a helical segment. Over 178-183 (KCILKA) the chain is Cytoplasmic.

This sequence belongs to the Casparian strip membrane proteins (CASP) family. Homodimer and heterodimers.

It localises to the cell membrane. The sequence is that of CASP-like protein UU1 from Selaginella moellendorffii (Spikemoss).